Reading from the N-terminus, the 31-residue chain is Photosystem II reaction center protein T (31 aa).

A helical transmembrane segment spans residues 3-23; sequence SVAYILVLTMALSVIFFAIAF.

This sequence belongs to the PsbT family. In terms of assembly, PSII is composed of 1 copy each of membrane proteins PsbA, PsbB, PsbC, PsbD, PsbE, PsbF, PsbH, PsbI, PsbJ, PsbK, PsbL, PsbM, PsbT, PsbX, PsbY, PsbZ, Psb30/Ycf12, peripheral proteins PsbO, CyanoQ (PsbQ), PsbU, PsbV and a large number of cofactors. It forms dimeric complexes.

The protein resides in the cellular thylakoid membrane. Functionally, found at the monomer-monomer interface of the photosystem II (PS II) dimer, plays a role in assembly and dimerization of PSII. PSII is a light-driven water plastoquinone oxidoreductase, using light energy to abstract electrons from H(2)O, generating a proton gradient subsequently used for ATP formation. The chain is Photosystem II reaction center protein T from Microcystis aeruginosa (strain NIES-843 / IAM M-2473).